The chain runs to 699 residues: UvrABC system protein B (699 aa).

Residues 35–188 enclose the Helicase ATP-binding domain; sequence ERINNGEKDV…DHLLRKFVSM (154 aa). 48–55 is an ATP binding site; it reads GATGTGKS. The short motif at 101–124 is the Beta-hairpin element; sequence YYDYYQPEAYVAQTDTFIEKDSSI. In terms of domain architecture, Helicase C-terminal spans 438-604; sequence QIDDLLGEIR…PLRKKIADIT (167 aa). The region spanning 654–689 is the UVR domain; that stretch reads VGLIEQLTEQMHGAAAELQFEVAARIRDEVKELKRE.

This sequence belongs to the UvrB family. Forms a heterotetramer with UvrA during the search for lesions. Interacts with UvrC in an incision complex.

Its subcellular location is the cytoplasm. Its function is as follows. The UvrABC repair system catalyzes the recognition and processing of DNA lesions. A damage recognition complex composed of 2 UvrA and 2 UvrB subunits scans DNA for abnormalities. Upon binding of the UvrA(2)B(2) complex to a putative damaged site, the DNA wraps around one UvrB monomer. DNA wrap is dependent on ATP binding by UvrB and probably causes local melting of the DNA helix, facilitating insertion of UvrB beta-hairpin between the DNA strands. Then UvrB probes one DNA strand for the presence of a lesion. If a lesion is found the UvrA subunits dissociate and the UvrB-DNA preincision complex is formed. This complex is subsequently bound by UvrC and the second UvrB is released. If no lesion is found, the DNA wraps around the other UvrB subunit that will check the other stand for damage. This chain is UvrABC system protein B, found in Paenarthrobacter aurescens (strain TC1).